We begin with the raw amino-acid sequence, 431 residues long: MSKNVVVIGTQWGDEGKGKIVDWLAESVQGVVRFQGGHNAGHTLWINGKKTILRLIPSGIMHPGVTCFIGNGVVLSPEALLKEIEELEAAGLDVRSRLQISEICPLILPYHIAVDQAREARKGEGKIGTTGRGIGPAYEDKIARRALRVQDLFNPALFDEKLAELLDYHNFVLTQYLGAPAVSAAQVRDQAMALAPAIAPMVKDVSSNLYAMQQAGQRLLFEGAQGALLDVDHGTYPFVTSSNCLAGAASAGAGVGPQSLDYVLGITKAYTTRVGSGPFPTELVDEIGTRLATIGKEFGSVTGRPRRCGWFDGAALKRSVRLNGITGLCITKLDVLDGLESIQLGVGYRVNGEFRDVLPYGAHAVAQAEAVLEELPGWSESTVGITEYAKLPAAARRYLERVAEVCGVPIDLVSTGPDRNETIVLRHPLKG.

GTP is bound by residues 13–19 (GDEGKGK) and 41–43 (GHT). Residue D14 is the Proton acceptor of the active site. The Mg(2+) site is built by D14 and G41. IMP is bound by residues 14 to 17 (DEGK), 39 to 42 (NAGH), T130, R144, Q225, T240, and R304. The active-site Proton donor is H42. 300–306 (SVTGRPR) contacts substrate. GTP-binding positions include R306, 332–334 (KLD), and 414–416 (STG).

Belongs to the adenylosuccinate synthetase family. Homodimer. Mg(2+) serves as cofactor.

Its subcellular location is the cytoplasm. The catalysed reaction is IMP + L-aspartate + GTP = N(6)-(1,2-dicarboxyethyl)-AMP + GDP + phosphate + 2 H(+). It functions in the pathway purine metabolism; AMP biosynthesis via de novo pathway; AMP from IMP: step 1/2. Plays an important role in the de novo pathway of purine nucleotide biosynthesis. Catalyzes the first committed step in the biosynthesis of AMP from IMP. The protein is Adenylosuccinate synthetase of Bordetella petrii (strain ATCC BAA-461 / DSM 12804 / CCUG 43448).